The following is a 333-amino-acid chain: Phosphate acyltransferase (333 aa).

The protein belongs to the PlsX family. In terms of assembly, homodimer. Probably interacts with PlsY.

The protein resides in the cytoplasm. The enzyme catalyses a fatty acyl-[ACP] + phosphate = an acyl phosphate + holo-[ACP]. It participates in lipid metabolism; phospholipid metabolism. Catalyzes the reversible formation of acyl-phosphate (acyl-PO(4)) from acyl-[acyl-carrier-protein] (acyl-ACP). This enzyme utilizes acyl-ACP as fatty acyl donor, but not acyl-CoA. The chain is Phosphate acyltransferase from Desulforamulus reducens (strain ATCC BAA-1160 / DSM 100696 / MI-1) (Desulfotomaculum reducens).